Reading from the N-terminus, the 493-residue chain is ATP synthase subunit beta 3 (493 aa).

The disordered stretch occupies residues 113-138 (VPGDNGTPLPPGTPRRPIHRKPPPLA). 170–177 (GGAGVGKT) contributes to the ATP binding site.

The protein belongs to the ATPase alpha/beta chains family. As to quaternary structure, F-type ATPases have 2 components, CF(1) - the catalytic core - and CF(0) - the membrane proton channel. CF(1) has five subunits: alpha(3), beta(3), gamma(1), delta(1), epsilon(1). CF(0) has three main subunits: a(1), b(2) and c(9-12). The alpha and beta chains form an alternating ring which encloses part of the gamma chain. CF(1) is attached to CF(0) by a central stalk formed by the gamma and epsilon chains, while a peripheral stalk is formed by the delta and b chains.

It is found in the cell inner membrane. It carries out the reaction ATP + H2O + 4 H(+)(in) = ADP + phosphate + 5 H(+)(out). Produces ATP from ADP in the presence of a proton gradient across the membrane. The catalytic sites are hosted primarily by the beta subunits. In Paraburkholderia xenovorans (strain LB400), this protein is ATP synthase subunit beta 3.